A 308-amino-acid chain; its full sequence is Putative acetyl-hydrolase LipR (308 aa).

The N-terminal stretch at 1–40 is a signal peptide; that stretch reads MNLRKNVIRSVLRGARPLFASRRLGIAGRRVLLATLTAGA. The short motif at 76–78 is the Involved in the stabilization of the negatively charged intermediate by the formation of the oxyanion hole element; the sequence is HGG. Residues S146, D239, and H269 contribute to the active site.

This sequence belongs to the 'GDXG' lipolytic enzyme family.

Required for maintaining the appropriate mycolic acid composition and permeability of the envelope on its exposure to acidic pH. The sequence is that of Putative acetyl-hydrolase LipR (lipR) from Mycobacterium tuberculosis (strain ATCC 25618 / H37Rv).